The following is a 449-amino-acid chain: Probable glycine dehydrogenase (decarboxylating) subunit 1 (449 aa).

The protein belongs to the GcvP family. N-terminal subunit subfamily. As to quaternary structure, the glycine cleavage system is composed of four proteins: P, T, L and H. In this organism, the P 'protein' is a heterodimer of two subunits.

The catalysed reaction is N(6)-[(R)-lipoyl]-L-lysyl-[glycine-cleavage complex H protein] + glycine + H(+) = N(6)-[(R)-S(8)-aminomethyldihydrolipoyl]-L-lysyl-[glycine-cleavage complex H protein] + CO2. In terms of biological role, the glycine cleavage system catalyzes the degradation of glycine. The P protein binds the alpha-amino group of glycine through its pyridoxal phosphate cofactor; CO(2) is released and the remaining methylamine moiety is then transferred to the lipoamide cofactor of the H protein. In Rhodospirillum centenum (strain ATCC 51521 / SW), this protein is Probable glycine dehydrogenase (decarboxylating) subunit 1.